The sequence spans 582 residues: Sodium-dependent low-affinity dicarboxylate transporter 1 (582 aa).

The next 12 helical transmembrane spans lie at 17 to 37 (SFVI…VGDS), 59 to 79 (ALPL…FGIM), 87 to 107 (AYLP…LAVE), 130 to 150 (VMAG…NTAT), 224 to 244 (LMLS…TGTA), 271 to 291 (IFAF…LYLL), 317 to 337 (FSFA…LWIL), 353 to 373 (EFVS…TLPE), 401 to 421 (FPWS…GVKE), 455 to 475 (TNVC…AELA), 482 to 502 (PLNF…LPVA), and 527 to 547 (VTLG…GFVF).

The protein belongs to the SLC13A/DASS transporter (TC 2.A.47) family. NADC subfamily. As to expression, nad-1 and nad-2 are coexpressed in the intestinal tract from early larvae to adults, expression is from the pharynx through to the anus. Expression level is significantly greater in the anterior half of the intestine than in the posterior half.

It is found in the membrane. In terms of biological role, low affinity sodium-dicarboxylate cotransporter that accepts a range of tricarboxylic acid-cycle intermediates with 4-5 carbon atoms. There is no interaction with monocarboxylates. The sequence is that of Sodium-dependent low-affinity dicarboxylate transporter 1 (nac-1) from Caenorhabditis elegans.